A 42-amino-acid chain; its full sequence is Photosystem II reaction center protein J (42 aa).

The chain crosses the membrane as a helical span at residues 10–30 (IPLWFIGVIAGIAALSIVGLF).

Belongs to the PsbJ family. In terms of assembly, PSII is composed of 1 copy each of membrane proteins PsbA, PsbB, PsbC, PsbD, PsbE, PsbF, PsbH, PsbI, PsbJ, PsbK, PsbL, PsbM, PsbT, PsbX, PsbY, PsbZ, Psb30/Ycf12, at least 3 peripheral proteins of the oxygen-evolving complex and a large number of cofactors. It forms dimeric complexes.

It localises to the plastid. The protein localises to the chloroplast thylakoid membrane. Functionally, one of the components of the core complex of photosystem II (PSII). PSII is a light-driven water:plastoquinone oxidoreductase that uses light energy to abstract electrons from H(2)O, generating O(2) and a proton gradient subsequently used for ATP formation. It consists of a core antenna complex that captures photons, and an electron transfer chain that converts photonic excitation into a charge separation. The sequence is that of Photosystem II reaction center protein J from Zygnema circumcarinatum (Green alga).